The sequence spans 325 residues: Tetraacyldisaccharide 4'-kinase (325 aa).

Residue 55–62 participates in ATP binding; the sequence is TAGGNGKT.

This sequence belongs to the LpxK family.

The enzyme catalyses a lipid A disaccharide + ATP = a lipid IVA + ADP + H(+). Its pathway is glycolipid biosynthesis; lipid IV(A) biosynthesis; lipid IV(A) from (3R)-3-hydroxytetradecanoyl-[acyl-carrier-protein] and UDP-N-acetyl-alpha-D-glucosamine: step 6/6. Functionally, transfers the gamma-phosphate of ATP to the 4'-position of a tetraacyldisaccharide 1-phosphate intermediate (termed DS-1-P) to form tetraacyldisaccharide 1,4'-bis-phosphate (lipid IVA). This is Tetraacyldisaccharide 4'-kinase from Citrobacter koseri (strain ATCC BAA-895 / CDC 4225-83 / SGSC4696).